Reading from the N-terminus, the 338-residue chain is Holliday junction branch migration complex subunit RuvB (338 aa).

The interval 1–181 (MTTRTISPEK…FGVISRLEFY (181 aa)) is large ATPase domain (RuvB-L). ATP is bound by residues Leu20, Arg21, Gly62, Lys65, Thr66, Thr67, 128 to 130 (EDF), Arg171, Tyr181, and Arg218. Thr66 lines the Mg(2+) pocket. Positions 182–252 (TDAELSTIVT…VVDESLKLLE (71 aa)) are small ATPAse domain (RuvB-S). Residues 255-338 (EKGFDQMDRT…APAPGQGALF (84 aa)) form a head domain (RuvB-H) region. Positions 291, 310, and 315 each coordinate DNA.

Belongs to the RuvB family. In terms of assembly, homohexamer. Forms an RuvA(8)-RuvB(12)-Holliday junction (HJ) complex. HJ DNA is sandwiched between 2 RuvA tetramers; dsDNA enters through RuvA and exits via RuvB. An RuvB hexamer assembles on each DNA strand where it exits the tetramer. Each RuvB hexamer is contacted by two RuvA subunits (via domain III) on 2 adjacent RuvB subunits; this complex drives branch migration. In the full resolvosome a probable DNA-RuvA(4)-RuvB(12)-RuvC(2) complex forms which resolves the HJ.

The protein resides in the cytoplasm. The enzyme catalyses ATP + H2O = ADP + phosphate + H(+). Its function is as follows. The RuvA-RuvB-RuvC complex processes Holliday junction (HJ) DNA during genetic recombination and DNA repair, while the RuvA-RuvB complex plays an important role in the rescue of blocked DNA replication forks via replication fork reversal (RFR). RuvA specifically binds to HJ cruciform DNA, conferring on it an open structure. The RuvB hexamer acts as an ATP-dependent pump, pulling dsDNA into and through the RuvAB complex. RuvB forms 2 homohexamers on either side of HJ DNA bound by 1 or 2 RuvA tetramers; 4 subunits per hexamer contact DNA at a time. Coordinated motions by a converter formed by DNA-disengaged RuvB subunits stimulates ATP hydrolysis and nucleotide exchange. Immobilization of the converter enables RuvB to convert the ATP-contained energy into a lever motion, pulling 2 nucleotides of DNA out of the RuvA tetramer per ATP hydrolyzed, thus driving DNA branch migration. The RuvB motors rotate together with the DNA substrate, which together with the progressing nucleotide cycle form the mechanistic basis for DNA recombination by continuous HJ branch migration. Branch migration allows RuvC to scan DNA until it finds its consensus sequence, where it cleaves and resolves cruciform DNA. The polypeptide is Holliday junction branch migration complex subunit RuvB (Geobacter sulfurreducens (strain ATCC 51573 / DSM 12127 / PCA)).